The sequence spans 337 residues: Ferredoxin--NADP reductase (337 aa).

7 residues coordinate FAD: D35, Q43, Y48, A88, F122, D289, and T330.

The protein belongs to the ferredoxin--NADP reductase type 2 family. As to quaternary structure, homodimer. It depends on FAD as a cofactor.

It catalyses the reaction 2 reduced [2Fe-2S]-[ferredoxin] + NADP(+) + H(+) = 2 oxidized [2Fe-2S]-[ferredoxin] + NADPH. The sequence is that of Ferredoxin--NADP reductase from Ehrlichia ruminantium (strain Welgevonden).